Reading from the N-terminus, the 433-residue chain is Alpha-(1,3)-fucosyltransferase fut-1 (433 aa).

Over 1-12 (MTARSIKLFFAR) the chain is Cytoplasmic. The helical; Signal-anchor for type II membrane protein transmembrane segment at 13 to 32 (WKYLMFACCITYLLVIYAPI) threads the bilayer. Residues 33–433 (SKSEQKDWKE…GTLVDSIPLD (401 aa)) are Lumenal-facing. 2 N-linked (GlcNAc...) asparagine glycosylation sites follow: Asn194 and Asn359.

It belongs to the glycosyltransferase 10 family. Mg(2+) is required as a cofactor. Requires Mn(2+) as cofactor. N-glycosylated. Glycosylation is important for enzymatic activity. As to expression, expressed in the pharyngeal-intestinal (PI) and anal valves. Expressed in ASG neurons and in one or two neurons in the retrovesicular ganglion and two neurons posterior to the PI valve and PHA and PHB neurons in the tail.

Its subcellular location is the golgi apparatus. The protein localises to the golgi stack membrane. The catalysed reaction is N(4)-{beta-D-GlcNAc-(1-&gt;2)-alpha-D-Man-(1-&gt;3)-[beta-D-GlcNAc-(1-&gt;2)-alpha-D-Man-(1-&gt;6)]-beta-D-Man-(1-&gt;4)-beta-D-GlcNAc-(1-&gt;4)-beta-D-GlcNAc}-L-asparaginyl-[protein] + GDP-beta-L-fucose = N(4)-{beta-D-GlcNAc-(1-&gt;2)-alpha-D-Man-(1-&gt;3)-[beta-D-GlcNAc-(1-&gt;2)-alpha-D-Man-(1-&gt;6)]-beta-D-Man-(1-&gt;4)-beta-D-GlcNAc-(1-&gt;4)-[alpha-L-Fuc(1-&gt;3)]-beta-D-GlcNAc}-L-asparaginyl-[protein] + GDP + H(+). Its pathway is protein modification; protein glycosylation. Its activity is regulated as follows. Inhibited by Cu(2+) or Zn(2+) and to a lesser extent Ni(2+) ions. Functionally, preferentially catalyzes the addition of fucose in alpha 1-3 linkage to the first GlcNAc residue (with or without alpha 1,6-linked fucose), next to the peptide chains in N-glycans. Unlike in mammals, does not require the prior action of N-acetylglucosaminyltransferase I to generate complex N-glycans. In Caenorhabditis elegans, this protein is Alpha-(1,3)-fucosyltransferase fut-1.